A 290-amino-acid polypeptide reads, in one-letter code: Probable aquaporin PIP2-7 (290 aa).

A run of 2 helical transmembrane segments spans residues Ala45–Ile65 and Gly79–Cys99. An NPA 1 motif is present at residues Asn109 to Ala111. 3 helical membrane passes run Val128–Ile148, Ser168–Phe188, and Ile202–Ile222. An NPA 2 motif is present at residues Asn230–Ala232. A helical membrane pass occupies residues Ile252–Leu272.

This sequence belongs to the MIP/aquaporin (TC 1.A.8) family. PIP (TC 1.A.8.11) subfamily. As to expression, expressed in roots.

The protein resides in the cell membrane. In terms of biological role, aquaporins facilitate the transport of water and small neutral solutes across cell membranes. The sequence is that of Probable aquaporin PIP2-7 (PIP2-7) from Oryza sativa subsp. japonica (Rice).